Reading from the N-terminus, the 416-residue chain is Beta sliding clamp (416 aa).

It belongs to the beta sliding clamp family. As to quaternary structure, forms a ring-shaped head-to-tail homodimer around DNA which binds and tethers DNA polymerases and other proteins to the DNA. The DNA replisome complex has a single clamp-loading complex (3 tau and 1 each of delta, delta', psi and chi subunits) which binds 3 Pol III cores (1 core on the leading strand and 2 on the lagging strand) each with a beta sliding clamp dimer. Additional proteins in the replisome are other copies of gamma, psi and chi, Ssb, DNA helicase and RNA primase.

Its subcellular location is the cytoplasm. Its function is as follows. Confers DNA tethering and processivity to DNA polymerases and other proteins. Acts as a clamp, forming a ring around DNA (a reaction catalyzed by the clamp-loading complex) which diffuses in an ATP-independent manner freely and bidirectionally along dsDNA. Initially characterized for its ability to contact the catalytic subunit of DNA polymerase III (Pol III), a complex, multichain enzyme responsible for most of the replicative synthesis in bacteria; Pol III exhibits 3'-5' exonuclease proofreading activity. The beta chain is required for initiation of replication as well as for processivity of DNA replication. The protein is Beta sliding clamp (dnaN) of Chlamydia trachomatis serovar D (strain ATCC VR-885 / DSM 19411 / UW-3/Cx).